A 365-amino-acid chain; its full sequence is 3-dehydroquinate synthase (365 aa).

NAD(+) contacts are provided by residues 69-74 (DGEAHK), 103-107 (GVIGD), 127-128 (TT), lysine 140, and lysine 149. Positions 182, 245, and 262 each coordinate Zn(2+).

This sequence belongs to the sugar phosphate cyclases superfamily. Dehydroquinate synthase family. NAD(+) is required as a cofactor. The cofactor is Co(2+). It depends on Zn(2+) as a cofactor.

It localises to the cytoplasm. The catalysed reaction is 7-phospho-2-dehydro-3-deoxy-D-arabino-heptonate = 3-dehydroquinate + phosphate. Its pathway is metabolic intermediate biosynthesis; chorismate biosynthesis; chorismate from D-erythrose 4-phosphate and phosphoenolpyruvate: step 2/7. Catalyzes the conversion of 3-deoxy-D-arabino-heptulosonate 7-phosphate (DAHP) to dehydroquinate (DHQ). This Pseudomonas putida (strain ATCC 47054 / DSM 6125 / CFBP 8728 / NCIMB 11950 / KT2440) protein is 3-dehydroquinate synthase.